Here is a 237-residue protein sequence, read N- to C-terminus: Phosphoribosylaminoimidazole-succinocarboxamide synthase (237 aa).

The protein belongs to the SAICAR synthetase family.

It catalyses the reaction 5-amino-1-(5-phospho-D-ribosyl)imidazole-4-carboxylate + L-aspartate + ATP = (2S)-2-[5-amino-1-(5-phospho-beta-D-ribosyl)imidazole-4-carboxamido]succinate + ADP + phosphate + 2 H(+). The protein operates within purine metabolism; IMP biosynthesis via de novo pathway; 5-amino-1-(5-phospho-D-ribosyl)imidazole-4-carboxamide from 5-amino-1-(5-phospho-D-ribosyl)imidazole-4-carboxylate: step 1/2. This Enterobacter sp. (strain 638) protein is Phosphoribosylaminoimidazole-succinocarboxamide synthase.